The sequence spans 53 residues: Large ribosomal subunit protein bL32c (53 aa).

This sequence belongs to the bacterial ribosomal protein bL32 family.

The protein localises to the plastid. It is found in the chloroplast. This chain is Large ribosomal subunit protein bL32c, found in Coffea arabica (Arabian coffee).